The following is a 199-amino-acid chain: 7-methyl-GTP pyrophosphatase (199 aa).

Residue Asp-76 is the Proton acceptor of the active site.

This sequence belongs to the Maf family. YceF subfamily. The cofactor is a divalent metal cation.

The protein resides in the cytoplasm. It catalyses the reaction N(7)-methyl-GTP + H2O = N(7)-methyl-GMP + diphosphate + H(+). Functionally, nucleoside triphosphate pyrophosphatase that hydrolyzes 7-methyl-GTP (m(7)GTP). May have a dual role in cell division arrest and in preventing the incorporation of modified nucleotides into cellular nucleic acids. The polypeptide is 7-methyl-GTP pyrophosphatase (Hahella chejuensis (strain KCTC 2396)).